The chain runs to 642 residues: Threonine--tRNA ligase (642 aa).

In terms of domain architecture, TGS spans 1–61 (MPVITLPDGS…ETDAELSIIT (61 aa)). Residues 243–534 (DHRKIGKQLD…LIEEYAGRFP (292 aa)) form a catalytic region. Residues cysteine 334, histidine 385, and histidine 511 each contribute to the Zn(2+) site.

Belongs to the class-II aminoacyl-tRNA synthetase family. As to quaternary structure, homodimer. Zn(2+) is required as a cofactor.

The protein localises to the cytoplasm. It carries out the reaction tRNA(Thr) + L-threonine + ATP = L-threonyl-tRNA(Thr) + AMP + diphosphate + H(+). Catalyzes the attachment of threonine to tRNA(Thr) in a two-step reaction: L-threonine is first activated by ATP to form Thr-AMP and then transferred to the acceptor end of tRNA(Thr). Also edits incorrectly charged L-seryl-tRNA(Thr). In Shewanella sp. (strain ANA-3), this protein is Threonine--tRNA ligase.